Consider the following 99-residue polypeptide: U1-theraphotoxin-Lsp1a (99 aa).

An N-terminal signal peptide occupies residues 1 to 23; that stretch reads MRSLTLAALLLCSLLLVFHTSAA. Residues 24–50 constitute a propeptide that is removed on maturation; that stretch reads AELEAQEGHLMIPGDTDTALETVDDER. 4 cysteine pairs are disulfide-bonded: C54/C67, C58/C91, C72/C74, and C85/C96.

The protein belongs to the neurotoxin 12 (Hwtx-2) family. 04 (lasiotoxin) subfamily. Expressed by the venom gland.

Its subcellular location is the secreted. Toxin that causes irreversible contractile paralysis into adult Aedes aegypti resulting in 100% mortality after 24 hours. This chain is U1-theraphotoxin-Lsp1a, found in Lasiodora sp. (strain IBSP 8539) (Brazilian salmon pink birdeater).